A 128-amino-acid polypeptide reads, in one-letter code: Iron-sulfur cluster insertion protein ErpA (128 aa).

3 residues coordinate iron-sulfur cluster: C56, C120, and C122.

It belongs to the HesB/IscA family. In terms of assembly, homodimer. It depends on iron-sulfur cluster as a cofactor.

Functionally, required for insertion of 4Fe-4S clusters for at least IspG. The chain is Iron-sulfur cluster insertion protein ErpA from Xanthomonas axonopodis pv. citri (strain 306).